Consider the following 111-residue polypeptide: Large ribosomal subunit protein uL24 (111 aa).

The protein belongs to the universal ribosomal protein uL24 family. As to quaternary structure, part of the 50S ribosomal subunit.

Functionally, one of two assembly initiator proteins, it binds directly to the 5'-end of the 23S rRNA, where it nucleates assembly of the 50S subunit. One of the proteins that surrounds the polypeptide exit tunnel on the outside of the subunit. The protein is Large ribosomal subunit protein uL24 of Chlamydia pneumoniae (Chlamydophila pneumoniae).